A 442-amino-acid chain; its full sequence is tRNA modification GTPase MnmE (442 aa).

The (6S)-5-formyl-5,6,7,8-tetrahydrofolate site is built by Arg27, Glu84, and Lys124. A TrmE-type G domain is found at 221 to 366 (GLHVVIVGAP…LLTNLQNFAE (146 aa)). Residues 231–236 (NAGKSS), 250–256 (SEEAGTT), and 275–278 (DTAG) each bind GTP. Residues Ser235 and Thr256 each contribute to the Mg(2+) site. Lys442 provides a ligand contact to (6S)-5-formyl-5,6,7,8-tetrahydrofolate.

It belongs to the TRAFAC class TrmE-Era-EngA-EngB-Septin-like GTPase superfamily. TrmE GTPase family. In terms of assembly, homodimer. Heterotetramer of two MnmE and two MnmG subunits. Requires K(+) as cofactor.

The protein localises to the cytoplasm. In terms of biological role, exhibits a very high intrinsic GTPase hydrolysis rate. Involved in the addition of a carboxymethylaminomethyl (cmnm) group at the wobble position (U34) of certain tRNAs, forming tRNA-cmnm(5)s(2)U34. In Brucella anthropi (strain ATCC 49188 / DSM 6882 / CCUG 24695 / JCM 21032 / LMG 3331 / NBRC 15819 / NCTC 12168 / Alc 37) (Ochrobactrum anthropi), this protein is tRNA modification GTPase MnmE.